A 553-amino-acid polypeptide reads, in one-letter code: Major facilitator-type transporter hxnZ (553 aa).

The next 5 membrane-spanning stretches (helical) occupy residues 89–109 (FTVA…ISAV), 128–148 (VAYY…SDLI), 152–172 (PAFN…AGTS), 174–194 (FIAF…NVVC), and 213–233 (ALSG…WVFL). The N-linked (GlcNAc...) asparagine glycan is linked to Asn-235. A run of 7 helical transmembrane segments spans residues 257 to 277 (YTLI…IFVF), 366 to 386 (ALIW…FNFL), 409 to 429 (IQSA…NTFL), 433 to 453 (WMMG…VGVK), 459 to 481 (LAFS…YAIM), 496 to 516 (TASG…SLIA), and 525 to 545 (PIYA…GLPF).

It belongs to the major facilitator superfamily.

The protein resides in the cell membrane. Major facilitator-type transporter, part of the hnx cluster involved in the purine degradation. The nicotinate hydroxylase hnxS accepts nicotinate as a substrate and catalyzes the first step of nicotinate catabolism. The major facilitator-type transporters hxnP and hxnZ are probably involved in the uptake of nicotinate-derived metabolites, and the oxidoreductases hxnT and hxnY in the further metabolism of 6-OH nicotinic acid. The polypeptide is Major facilitator-type transporter hxnZ (Emericella nidulans (strain FGSC A4 / ATCC 38163 / CBS 112.46 / NRRL 194 / M139) (Aspergillus nidulans)).